A 240-amino-acid polypeptide reads, in one-letter code: Acetoacetyl-CoA reductase (240 aa).

NADP(+) contacts are provided by residues 18-20 (RGI) and 82-86 (NAGIT). Substrate-binding positions include S134 and 141-144 (NVGQ). The active-site Proton acceptor is Y147. An NADP(+)-binding site is contributed by 177-180 (PGFI). 178–179 (GF) contacts substrate.

The protein belongs to the short-chain dehydrogenases/reductases (SDR) family.

The catalysed reaction is a (3R)-3-hydroxyacyl-CoA + NADP(+) = a 3-oxoacyl-CoA + NADPH + H(+). It functions in the pathway biopolymer metabolism; poly-(R)-3-hydroxybutanoate biosynthesis. Catalyzes the reduction of acetoacetyl-CoA to (R)-3-hydroxybutyryl-CoA. When expressed in E.coli with Synechocystis PhaA, PhaC and PhaE confers the ability to synthesize up to 12% (w/w) poly(3-hydroxybutyrate) (PHB) depending on the carbon source. The protein is Acetoacetyl-CoA reductase of Synechocystis sp. (strain ATCC 27184 / PCC 6803 / Kazusa).